A 389-amino-acid polypeptide reads, in one-letter code: MANGADRLDLDGKPIKPMTICMIGAGGFIGSHLCEKLMTETPHKVLALDVYNDKIKHLLEPDTVQWAGRIQFHRINIKHDSRLEGLIKMADLTINLAAICTPADYNTRPLDTIYSNFIDALPVVKYCSENNKRLIHFSTCEVYGKTIGSFLPKDHPLRQDPEFYVLKEDISPCIFGSIEKQRWSYACAKQLIERLVYAEGAENGLEFTIVRPFNWIGPRMDFIPGIDGPSEGVPRVLACFSNNLLRREPLKLVDGGESQRTFIYIKDAIEAVLLMIENPERANGHIFNVGNPNNEVTVRQLAEMMTEVYAKVSGETAIESPTIDVSSKEFYGEGYDDSDKRIPDMTIINRQLGWNPKTSLWDLLESTLTYQHTTYAEAIKKATSKPVAS.

Residues Phe-28, Ile-29, Asp-49, Asn-76, Ile-77, and Leu-96 each contribute to the NAD(+) site. Residues Tyr-105, Thr-139, Glu-141, Arg-182, and Tyr-185 each contribute to the UDP-alpha-D-glucuronate site. NAD(+) is bound by residues Tyr-185 and Lys-189. The active-site Proton acceptor is the Tyr-185. Asn-214 lines the UDP-alpha-D-glucuronate pocket. NAD(+) is bound by residues Trp-215 and Arg-235. Lys-251, Val-253, Arg-260, Tyr-331, Tyr-335, Asp-337, and Arg-341 together coordinate UDP-alpha-D-glucuronate.

Belongs to the NAD(P)-dependent epimerase/dehydratase family. In terms of assembly, homodimer and heterodimer with AXS1. The cofactor is NAD(+). In terms of tissue distribution, widely expressed with stronger expression in dark-grown seedlings, leaves and stems, and lower levels in flowers, siliques, pistils, pollen and roots.

It is found in the cytoplasm. It catalyses the reaction UDP-alpha-D-glucuronate + H(+) = UDP-alpha-D-xylose + CO2. The catalysed reaction is UDP-alpha-D-glucuronate + H(+) = UDP-alpha-D-apiose + CO2. Functionally, together with AXS1, catalyzes the conversion of UDP-D-glucuronate into a mixture of UDP-D-apiose (UDP-Api) as the main product and UDP-D-xylose to a lesser extent, via a cycle of oxidation and reduction. D-Apiose (3-C-hydroxymethyl-d-erythrose) is the only plant cell wall monosaccharide with a branched carbon skeleton and is found in rhamnogalacturonan II (RG-II), apiogalacturonan, and several apioglycosides. In Arabidopsis thaliana (Mouse-ear cress), this protein is UDP-D-apiose/UDP-D-xylose synthase 2.